Consider the following 484-residue polypeptide: Protein nucleotidyltransferase YdiU (484 aa).

ATP is bound by residues glycine 81, glycine 83, arginine 84, lysine 103, aspartate 115, glycine 116, arginine 166, and arginine 173. Residue aspartate 244 is the Proton acceptor of the active site. Residues asparagine 245 and aspartate 254 each coordinate Mg(2+). Aspartate 254 serves as a coordination point for ATP.

Belongs to the SELO family. It depends on Mg(2+) as a cofactor. The cofactor is Mn(2+).

The catalysed reaction is L-seryl-[protein] + ATP = 3-O-(5'-adenylyl)-L-seryl-[protein] + diphosphate. It carries out the reaction L-threonyl-[protein] + ATP = 3-O-(5'-adenylyl)-L-threonyl-[protein] + diphosphate. It catalyses the reaction L-tyrosyl-[protein] + ATP = O-(5'-adenylyl)-L-tyrosyl-[protein] + diphosphate. The enzyme catalyses L-histidyl-[protein] + UTP = N(tele)-(5'-uridylyl)-L-histidyl-[protein] + diphosphate. The catalysed reaction is L-seryl-[protein] + UTP = O-(5'-uridylyl)-L-seryl-[protein] + diphosphate. It carries out the reaction L-tyrosyl-[protein] + UTP = O-(5'-uridylyl)-L-tyrosyl-[protein] + diphosphate. Its function is as follows. Nucleotidyltransferase involved in the post-translational modification of proteins. It can catalyze the addition of adenosine monophosphate (AMP) or uridine monophosphate (UMP) to a protein, resulting in modifications known as AMPylation and UMPylation. This Shewanella oneidensis (strain ATCC 700550 / JCM 31522 / CIP 106686 / LMG 19005 / NCIMB 14063 / MR-1) protein is Protein nucleotidyltransferase YdiU.